The chain runs to 397 residues: 2,3,4,5-tetrahydropyridine-2,6-dicarboxylate N-succinyltransferase (397 aa).

E265 functions as the Acyl-anhydride intermediate in the catalytic mechanism. Residues R267, G282, S285, A308, 323–324 (DA), G331, K360, and 373–376 (RQNS) contribute to the succinyl-CoA site.

This sequence belongs to the type 2 tetrahydrodipicolinate N-succinyltransferase family. In terms of assembly, homotrimer.

It is found in the cytoplasm. It catalyses the reaction (S)-2,3,4,5-tetrahydrodipicolinate + succinyl-CoA + H2O = (S)-2-succinylamino-6-oxoheptanedioate + CoA. It participates in amino-acid biosynthesis; L-lysine biosynthesis via DAP pathway; LL-2,6-diaminopimelate from (S)-tetrahydrodipicolinate (succinylase route): step 1/3. In terms of biological role, catalyzes the conversion of the cyclic tetrahydrodipicolinate (THDP) into the acyclic N-succinyl-L-2-amino-6-oxopimelate using succinyl-CoA. The polypeptide is 2,3,4,5-tetrahydropyridine-2,6-dicarboxylate N-succinyltransferase (Sulfurovum sp. (strain NBC37-1)).